The following is a 179-amino-acid chain: SCAN domain-containing protein 1 (179 aa).

Residues 1-104 form a disordered region; that stretch reads MAATEPILAA…PGPAGSRLGP (104 aa). Residues 52–80 show a composition bias toward low complexity; that stretch reads SPNAAVPEAIPTPRAAASAALELPLGPAP. Residues 108 to 166 form the SCAN box domain; sequence RQRFRQFRYQDAAGPREAFRQLRELSRQWLRPDIRTKEQIVEMLVQEQLLAILPEAARA.

In terms of assembly, interacts with ZNF202.

Its subcellular location is the nucleus. May regulate transcriptional activity. This Homo sapiens (Human) protein is SCAN domain-containing protein 1 (SCAND1).